The sequence spans 506 residues: ATP synthase subunit alpha (506 aa).

Residue 171 to 178 (GDRQTGKT) participates in ATP binding.

Belongs to the ATPase alpha/beta chains family. As to quaternary structure, F-type ATPases have 2 components, CF(1) - the catalytic core - and CF(0) - the membrane proton channel. CF(1) has five subunits: alpha(3), beta(3), gamma(1), delta(1), epsilon(1). CF(0) has four main subunits: a, b, b' and c.

It localises to the cellular thylakoid membrane. The catalysed reaction is ATP + H2O + 4 H(+)(in) = ADP + phosphate + 5 H(+)(out). Its function is as follows. Produces ATP from ADP in the presence of a proton gradient across the membrane. The alpha chain is a regulatory subunit. The protein is ATP synthase subunit alpha of Nostoc punctiforme (strain ATCC 29133 / PCC 73102).